The following is a 104-amino-acid chain: Protein MGF 110-2L (104 aa).

The signal sequence occupies residues 1–31; the sequence is MRFFSYLGLLLAGLTSLQGFSTDNLLEEELR.

Belongs to the asfivirus MGF 110 family.

Functionally, plays a role in virus cell tropism, and may be required for efficient virus replication in macrophages. This chain is Protein MGF 110-2L, found in African swine fever virus (isolate Pig/Portugal/OURT88/1988) (ASFV).